A 318-amino-acid chain; its full sequence is Annexin D6 (318 aa).

N-acetylalanine is present on A2. Annexin repeat units lie at residues 11–82 (PLPE…LWTL), 83–154 (DPTE…PLVS), 168–239 (KLAR…TAIK), and 243–314 (YPEK…ALLG). Residues F24, G26, G28, and E68 each coordinate Ca(2+). At S95 the chain carries Phosphoserine. 2 positions are modified to phosphothreonine: T100 and T112. The residue at position 129 (Y129) is a Phosphotyrosine. Ca(2+) is bound by residues I256, R258, and G260. At Y285 the chain carries Phosphotyrosine. Position 290 is a phosphoserine (S290). Ca(2+)-binding residues include D300 and T301.

It belongs to the annexin (TC 1.A.31.1) family. As to expression, expressed in flowers.

The chain is Annexin D6 (ANN6) from Arabidopsis thaliana (Mouse-ear cress).